Reading from the N-terminus, the 483-residue chain is Aspartyl/glutamyl-tRNA(Asn/Gln) amidotransferase subunit B (483 aa).

Belongs to the GatB/GatE family. GatB subfamily. As to quaternary structure, heterotrimer of A, B and C subunits.

It catalyses the reaction L-glutamyl-tRNA(Gln) + L-glutamine + ATP + H2O = L-glutaminyl-tRNA(Gln) + L-glutamate + ADP + phosphate + H(+). It carries out the reaction L-aspartyl-tRNA(Asn) + L-glutamine + ATP + H2O = L-asparaginyl-tRNA(Asn) + L-glutamate + ADP + phosphate + 2 H(+). Allows the formation of correctly charged Asn-tRNA(Asn) or Gln-tRNA(Gln) through the transamidation of misacylated Asp-tRNA(Asn) or Glu-tRNA(Gln) in organisms which lack either or both of asparaginyl-tRNA or glutaminyl-tRNA synthetases. The reaction takes place in the presence of glutamine and ATP through an activated phospho-Asp-tRNA(Asn) or phospho-Glu-tRNA(Gln). In Rickettsia canadensis (strain McKiel), this protein is Aspartyl/glutamyl-tRNA(Asn/Gln) amidotransferase subunit B.